Consider the following 146-residue polypeptide: MTILHQSEDQIEVASEVAAASEAASEVASEAVSPEAASVAPEVDLVVQEVVTVAIPEVATVATPEADMVAPEVVTIVLEVVTIVQEVVIPEVAMVVQEMITVLQEVATVVQEVVMMVQEAIMVLQEMHTEPEMLHVKDHQPGKPFI.

This is an uncharacterized protein from Saccharomyces cerevisiae (strain ATCC 204508 / S288c) (Baker's yeast).